We begin with the raw amino-acid sequence, 578 residues long: Putative ankyrin repeat protein FPV022 (578 aa).

11 ANK repeats span residues 4–34 (RRKS…DLNK), 38–67 (KNRT…KMSA), 68–97 (CKVP…SVDV), 100–129 (KGET…SGPY), 160–189 (YGHT…ITDN), 222–251 (EGTT…DPKV), 255–287 (HSVS…MVNM), 320–349 (YLSE…NINK), 353–382 (YGNI…DVNA), 386–415 (DGNT…DINS), and 419–449 (NGRT…KKNK).

The sequence is that of Putative ankyrin repeat protein FPV022 from Fowlpox virus (strain NVSL) (FPV).